The chain runs to 47 residues: MKKFRWAILLAVLVACLLLWMQTLNVMCDQDVQFFSGICTINKFIPW.

A helical membrane pass occupies residues tryptophan 6–valine 26.

The protein belongs to the MgrB family. In terms of assembly, may form homooligomers. Probably interacts with the periplasmic domain of PhoQ.

The protein resides in the cell inner membrane. In terms of biological role, phoP-regulated transcription is redox-sensitive, being activated when the periplasm becomes more reducing. MgrB acts between DsbA/DsbB and PhoP/PhoQ in this pathway. Represses PhoP/PhoQ signaling, possibly by binding to the periplasmic domain of PhoQ, altering its activity and that of downstream effector PhoP. This Cronobacter sakazakii (strain ATCC BAA-894) (Enterobacter sakazakii) protein is PhoP/PhoQ regulator MgrB.